The primary structure comprises 205 residues: LexA repressor (205 aa).

Positions 28–48 (IRDIMKHFNFKSPRAAHKHLI) form a DNA-binding region, H-T-H motif. Active-site for autocatalytic cleavage activity residues include Ser125 and Lys163.

This sequence belongs to the peptidase S24 family. In terms of assembly, homodimer.

It catalyses the reaction Hydrolysis of Ala-|-Gly bond in repressor LexA.. Functionally, represses a number of genes involved in the response to DNA damage (SOS response), including recA and lexA. In the presence of single-stranded DNA, RecA interacts with LexA causing an autocatalytic cleavage which disrupts the DNA-binding part of LexA, leading to derepression of the SOS regulon and eventually DNA repair. This chain is LexA repressor, found in Petrotoga mobilis (strain DSM 10674 / SJ95).